Reading from the N-terminus, the 37-residue chain is Cytochrome b6-f complex subunit 5 (37 aa).

A helical transmembrane segment spans residues 5 to 25; the sequence is FLFGIVLGLIPITLAGLFVTA.

Belongs to the PetG family. The 4 large subunits of the cytochrome b6-f complex are cytochrome b6, subunit IV (17 kDa polypeptide, PetD), cytochrome f and the Rieske protein, while the 4 small subunits are PetG, PetL, PetM and PetN. The complex functions as a dimer.

It is found in the plastid. Its subcellular location is the chloroplast thylakoid membrane. Its function is as follows. Component of the cytochrome b6-f complex, which mediates electron transfer between photosystem II (PSII) and photosystem I (PSI), cyclic electron flow around PSI, and state transitions. PetG is required for either the stability or assembly of the cytochrome b6-f complex. The chain is Cytochrome b6-f complex subunit 5 from Platanus occidentalis (Sycamore).